Consider the following 385-residue polypeptide: S-adenosylmethionine synthase (385 aa).

H15 lines the ATP pocket. D17 is a binding site for Mg(2+). Residue E43 participates in K(+) binding. E56 and Q99 together coordinate L-methionine. The interval 99 to 109 is flexible loop; the sequence is QSVDIAQGVDR. Residues 164 to 166, 230 to 231, D239, 245 to 246, and K266 contribute to the ATP site; these read DAK, RF, and RK. Residue D239 participates in L-methionine binding. K270 serves as a coordination point for L-methionine.

Belongs to the AdoMet synthase family. As to quaternary structure, homotetramer; dimer of dimers. Mg(2+) is required as a cofactor. Requires K(+) as cofactor.

It localises to the cytoplasm. The catalysed reaction is L-methionine + ATP + H2O = S-adenosyl-L-methionine + phosphate + diphosphate. Its pathway is amino-acid biosynthesis; S-adenosyl-L-methionine biosynthesis; S-adenosyl-L-methionine from L-methionine: step 1/1. Functionally, catalyzes the formation of S-adenosylmethionine (AdoMet) from methionine and ATP. The overall synthetic reaction is composed of two sequential steps, AdoMet formation and the subsequent tripolyphosphate hydrolysis which occurs prior to release of AdoMet from the enzyme. The sequence is that of S-adenosylmethionine synthase from Alkalilimnicola ehrlichii (strain ATCC BAA-1101 / DSM 17681 / MLHE-1).